Reading from the N-terminus, the 449-residue chain is 23S rRNA (uracil(1939)-C(5))-methyltransferase RlmD (449 aa).

Positions 12–70 constitute a TRAM domain; sequence SKQLSAKQSFSVHQLDHLGAGIAQHQGKVVFIPGALPNETVQAQLTEQKKNYARAKLIK. [4Fe-4S] cluster contacts are provided by Cys83, Cys89, Cys92, and Cys170. Residues Gln282, Phe311, Asn316, Glu332, Asp359, and Asp379 each contribute to the S-adenosyl-L-methionine site. Cys405 functions as the Nucleophile in the catalytic mechanism.

It belongs to the class I-like SAM-binding methyltransferase superfamily. RNA M5U methyltransferase family. RlmD subfamily.

It catalyses the reaction uridine(1939) in 23S rRNA + S-adenosyl-L-methionine = 5-methyluridine(1939) in 23S rRNA + S-adenosyl-L-homocysteine + H(+). Its function is as follows. Catalyzes the formation of 5-methyl-uridine at position 1939 (m5U1939) in 23S rRNA. This chain is 23S rRNA (uracil(1939)-C(5))-methyltransferase RlmD, found in Shewanella sp. (strain ANA-3).